Consider the following 94-residue polypeptide: Co-chaperonin GroES (94 aa).

Belongs to the GroES chaperonin family. Heptamer of 7 subunits arranged in a ring. Interacts with the chaperonin GroEL.

The protein localises to the cytoplasm. Together with the chaperonin GroEL, plays an essential role in assisting protein folding. The GroEL-GroES system forms a nano-cage that allows encapsulation of the non-native substrate proteins and provides a physical environment optimized to promote and accelerate protein folding. GroES binds to the apical surface of the GroEL ring, thereby capping the opening of the GroEL channel. The sequence is that of Co-chaperonin GroES from Streptococcus pneumoniae (strain Taiwan19F-14).